The following is a 339-amino-acid chain: UDP-N-acetylenolpyruvoylglucosamine reductase (339 aa).

The region spanning 19–189 (VDVQARLFAE…LRVRFKLSRV (171 aa)) is the FAD-binding PCMH-type domain. Residue Arg166 is part of the active site. The active-site Proton donor is Ser239. Residue Glu335 is part of the active site.

It belongs to the MurB family. Requires FAD as cofactor.

It is found in the cytoplasm. It carries out the reaction UDP-N-acetyl-alpha-D-muramate + NADP(+) = UDP-N-acetyl-3-O-(1-carboxyvinyl)-alpha-D-glucosamine + NADPH + H(+). It participates in cell wall biogenesis; peptidoglycan biosynthesis. Its function is as follows. Cell wall formation. This is UDP-N-acetylenolpyruvoylglucosamine reductase from Pseudomonas syringae pv. syringae (strain B728a).